A 92-amino-acid polypeptide reads, in one-letter code: Small ribosomal subunit protein uS19c (92 aa).

It belongs to the universal ribosomal protein uS19 family.

Its subcellular location is the plastid. It localises to the chloroplast. Its function is as follows. Protein S19 forms a complex with S13 that binds strongly to the 16S ribosomal RNA. The chain is Small ribosomal subunit protein uS19c from Nicotiana sylvestris (Wood tobacco).